The chain runs to 379 residues: Homoserine O-succinyltransferase (379 aa).

One can recognise an AB hydrolase-1 domain in the interval 51-360 (NAVLICHALS…DAPQGHDAFL (310 aa)). S157 (nucleophile) is an active-site residue. R227 serves as a coordination point for substrate. Residues D323 and H356 contribute to the active site. Substrate is bound at residue D357.

Belongs to the AB hydrolase superfamily. MetX family. As to quaternary structure, homodimer.

It localises to the cytoplasm. It catalyses the reaction L-homoserine + succinyl-CoA = O-succinyl-L-homoserine + CoA. Its pathway is amino-acid biosynthesis; L-methionine biosynthesis via de novo pathway; O-succinyl-L-homoserine from L-homoserine: step 1/1. Transfers a succinyl group from succinyl-CoA to L-homoserine, forming succinyl-L-homoserine. In Pseudomonas aeruginosa (strain LESB58), this protein is Homoserine O-succinyltransferase.